Here is a 418-residue protein sequence, read N- to C-terminus: Tyrosine--tRNA ligase (418 aa).

Tyrosine 34 provides a ligand contact to L-tyrosine. The 'HIGH' region signature appears at 39–48; it reads PTADSLHLGH. L-tyrosine is bound by residues tyrosine 169 and glutamine 173. Residues 229-233 carry the 'KMSKS' region motif; that stretch reads KFGKS. ATP is bound at residue lysine 232. Residues 352 to 418 form the S4 RNA-binding domain; it reads HNIVEILVAA…GKKKYAVLTY (67 aa).

This sequence belongs to the class-I aminoacyl-tRNA synthetase family. TyrS type 1 subfamily. As to quaternary structure, homodimer.

It is found in the cytoplasm. The enzyme catalyses tRNA(Tyr) + L-tyrosine + ATP = L-tyrosyl-tRNA(Tyr) + AMP + diphosphate + H(+). Functionally, catalyzes the attachment of tyrosine to tRNA(Tyr) in a two-step reaction: tyrosine is first activated by ATP to form Tyr-AMP and then transferred to the acceptor end of tRNA(Tyr). The polypeptide is Tyrosine--tRNA ligase (Streptococcus pyogenes serotype M1).